A 388-amino-acid chain; its full sequence is Staphopain A (388 aa).

The signal sequence occupies residues Met-1 to Ala-25. Positions Glu-26–Thr-214 are excised as a propeptide. Catalysis depends on residues Cys-238, His-334, and Asn-355.

This sequence belongs to the peptidase C47 family. As to quaternary structure, in the cytoplasm, prematurely activated/folded ScpA forms a stable non-covalent complex with ScpB. Post-translationally, cleavage leads to the activation of ScpA probably by an auto-catalytic manner.

The protein localises to the secreted. The catalysed reaction is Broad endopeptidase action on proteins including elastin, but rather limited hydrolysis of small-molecule substrates. Assays are conveniently made with hemoglobin, casein or Z-Phe-Arg-NHMec as substrate.. With respect to regulation, prematurely activated/folded staphopain A is inhibited by staphostatin A (ScpB), which is probably required to protect staphylococcal cytoplasmic proteins from degradation by ScpA. Also inactivated by heavy metal ions such as Hg(2+) or Ag(+), iodoacetamide, E-64 and human plasma. Its function is as follows. Cysteine protease that plays an important role in the inhibition of host innate immune response. Cleaves host elastins found in connective tissues, pulmonary surfactant protein A in the lungs, and the chemokine receptor CXCR2 on leukocytes. Proteolytic cleavage of surfactant protein A impairs bacterial phagocytosis by neutrophils while CXCR2 degradation blocks neutrophil activation and chemotaxis. Additionally, promotes vascular leakage by activating the plasma kallikerin/kinin system, resulting in hypotension. This Staphylococcus aureus protein is Staphopain A (sspP).